Here is a 546-residue protein sequence, read N- to C-terminus: NAD(P)H-quinone oxidoreductase chain 4 (546 aa).

A run of 14 helical transmembrane segments spans residues 17 to 37 (VPWL…VPFI), 48 to 68 (WYAL…YLNG), 103 to 123 (LILL…PVSF), 127 to 147 (LFYF…AVQD), 149 to 169 (LLFF…LAIW), 181 to 201 (FILY…AMGF), 222 to 242 (GFQL…LPIV), 256 to 276 (TAPV…YALL), 290 to 310 (FAPL…LTSF), 327 to 347 (MGFV…GAML), 348 to 368 (QMIS…ATYD), 389 to 409 (FALW…SGFV), 430 to 450 (VVIC…LLSM), and 477 to 497 (VYII…PRLM).

This sequence belongs to the complex I subunit 4 family.

Its subcellular location is the cellular thylakoid membrane. The enzyme catalyses a plastoquinone + NADH + (n+1) H(+)(in) = a plastoquinol + NAD(+) + n H(+)(out). It catalyses the reaction a plastoquinone + NADPH + (n+1) H(+)(in) = a plastoquinol + NADP(+) + n H(+)(out). Functionally, NDH-1 shuttles electrons from NAD(P)H, via FMN and iron-sulfur (Fe-S) centers, to quinones in the respiratory chain. The immediate electron acceptor for the enzyme in this species is believed to be plastoquinone. Couples the redox reaction to proton translocation (for every two electrons transferred, four hydrogen ions are translocated across the cytoplasmic membrane), and thus conserves the redox energy in a proton gradient. This Parasynechococcus marenigrum (strain WH8102) protein is NAD(P)H-quinone oxidoreductase chain 4.